A 726-amino-acid chain; its full sequence is Probable pre-mRNA-splicing factor ATP-dependent RNA helicase DEAH2 (726 aa).

The Helicase ATP-binding domain maps to 71-240 (LKTLNNNQTL…FSGAPLMKVP (170 aa)). An ATP-binding site is contributed by 84–91 (GETGSGKT). The DEAH box motif lies at 187-190 (DEAH). The region spanning 265–445 (TVVQIHMCEP…NTVLTLKKLG (181 aa)) is the Helicase C-terminal domain.

This sequence belongs to the DEAD box helicase family. DEAH subfamily. PRP43 sub-subfamily.

The catalysed reaction is ATP + H2O = ADP + phosphate + H(+). Functionally, may be involved in pre-mRNA splicing. This chain is Probable pre-mRNA-splicing factor ATP-dependent RNA helicase DEAH2, found in Arabidopsis thaliana (Mouse-ear cress).